Consider the following 107-residue polypeptide: Small ribosomal subunit protein uS17 (107 aa).

It belongs to the universal ribosomal protein uS17 family. In terms of assembly, part of the 30S ribosomal subunit.

One of the primary rRNA binding proteins, it binds specifically to the 5'-end of 16S ribosomal RNA. The polypeptide is Small ribosomal subunit protein uS17 (Thermotoga maritima (strain ATCC 43589 / DSM 3109 / JCM 10099 / NBRC 100826 / MSB8)).